Consider the following 404-residue polypeptide: Indole-3-acetate O-methyltransferase 1 (404 aa).

S-adenosyl-L-methionine-binding positions include 82–83 (GC), N88, D120, 169–171 (TFY), and 186–188 (TFS). Mg(2+) is bound by residues N208, V212, R294, D295, F297, and N298.

Belongs to the methyltransferase superfamily. SABATH family. Homodimer. The cofactor is Mg(2+). As to expression, expressed in roots and panicles.

The catalysed reaction is (indol-3-yl)acetate + S-adenosyl-L-methionine = methyl (indol-3-yl)acetate + S-adenosyl-L-homocysteine. In terms of biological role, catalyzes the methylation of the free carboxyl end of the plant hormone indole-3-acetic acid (IAA). Converts IAA to IAA methyl ester (MeIAA). Regulates IAA activities by IAA methylation. Methylation of IAA plays an important role in regulating plant development and auxin homeostasis. MeIAA seems to be an inactive form of IAA. This chain is Indole-3-acetate O-methyltransferase 1 (IAMT1), found in Oryza sativa subsp. japonica (Rice).